The chain runs to 271 residues: Type II restriction enzyme ScrFI (271 aa).

The enzyme catalyses Endonucleolytic cleavage of DNA to give specific double-stranded fragments with terminal 5'-phosphates.. A P subtype restriction enzyme that recognizes the double-stranded sequence 5'-CCNGG-3' and cleaves after C-2. In Lactococcus lactis subsp. cremoris (Streptococcus cremoris), this protein is Type II restriction enzyme ScrFI.